Consider the following 1111-residue polypeptide: MCLFLLLFPYLASGQFLQTVKVGLLFSKDTASVMRAVGYRTSAAAVLVARDRIRAEHLLDQYDFNFTVKFDECTEGLAGGKTVELINHDNVDVIIGPTCNRAGIAVASLAAYYNVPVFQWGLTTAADIGNVSRYPTTVTLSLDTHSMALGVREVLRRFEWDEFVFIYSNDGDEEKCASMKDDLEKMGIENSDVTLAYMVQIQTVTLDALQKALTEVSKRGRIIIACFANGRGFKKAFVASTVLAGMSTDEYMYMFAEPQSRGFYVDEINGGEHYSWDDTDGNFVTGLTPEQIRDAYGKVLYICDNMGLPTTITPEFANFSSQLISRMTEQPFNCVQDCSNSTYKVPATYAGQLFDAFYAYGVALNRSLTQDPTRANLKNGSFVLSDIGMSFQGVGGGTVTLDDTGTRIVQVYMFALNTSLLPYLAASLVINGSEVEYTPFYKSEADLWSVRPLARPICGFSGLECPPDFVKEYLVYTIIAAVIVVLALLAGCAGLLYTMQMKRKEMERQDLLWQVPFIELQQVQSKSKAEASMHSFASGPSTSTKITVESRSETINFIFYYYQQDILAAMKHDLILQFDAEQKAEFRQMRNFDNDNLNKFIGLCLDGPQLFSLWRFCSRGSLSDVISKSSMQMDSFFMFSLIRDISNGLLFIHNSFLKCHGHLTSRCCLIDDRWQIKISGYGLKSVRTFENPKKEDLLWTPPENLRNENEERLPEGDIYSFGIICSEILTRSSAFDLENRKEKPDVIIYQVKKGGHNPMRPSLDTGETVEINPALLHLIRDCWTERPSERPSIEQVRGHLNGMRDGRKSNLMDHVFNMLETYASTLEEEVSDRTKELVEEKKKSDVLLYRMLPKMVADKLKLGQTVEPETFEQVTIFFSDVVQFTTLAGKCTPLQVVTLLNDLYTIFDGIIEQNDVYKVETIGDGYLCVSGLPHRNGNEHIRHIARMSLGFLSSLEFFRVQHLPSERINLRIGINCGSVVAGVVGLTMPRYCLFGDAVNTASRMESNGKPGKIHVTAEANQMLTQVVGGFRTESRGEVIIKGKGVMETYWLLGEQSRISVSAQAPREKTPEPPRRQSVRSISPIIEKMSEETQKGLYSAYKDFNNGNECVS.

The first 14 residues, 1-14 (MCLFLLLFPYLASG), serve as a signal peptide directing secretion. The Extracellular portion of the chain corresponds to 15–473 (QFLQTVKVGL…ECPPDFVKEY (459 aa)). Residues Asn65, Asn130, Asn318, Asn340, Asn365, and Asn379 are each glycosylated (N-linked (GlcNAc...) asparagine). The chain crosses the membrane as a helical span at residues 474-494 (LVYTIIAAVIVVLALLAGCAG). In terms of domain architecture, Protein kinase spans 482-817 (VIVVLALLAG…KSNLMDHVFN (336 aa)). ATP contacts are provided by residues 488–496 (LLAGCAGLL) and Lys545. At 495 to 1111 (LLYTMQMKRK…DFNNGNECVS (617 aa)) the chain is on the cytoplasmic side. A Guanylate cyclase domain is found at 875–1005 (TIFFSDVVQF…DAVNTASRME (131 aa)). Positions 1061–1082 (SAQAPREKTPEPPRRQSVRSIS) are disordered. The span at 1065–1074 (PREKTPEPPR) shows a compositional bias: basic and acidic residues.

Belongs to the adenylyl cyclase class-4/guanylyl cyclase family. As to quaternary structure, homodimer. Expressed asymmetrically in ASEL sensory neuron.

The protein resides in the cell membrane. The protein localises to the cell projection. It localises to the cilium. The enzyme catalyses GTP = 3',5'-cyclic GMP + diphosphate. Functionally, guanylate cyclase involved in the production of the second messenger cGMP. Regulates chemotaxis responses toward Na(1+) and Li(1+) salt ions and alkaline pH in ASE left (ASEL) sensory neuron. Directly senses environmental alkalinity in ASEL neuron which probably leads to the activation of cGMP-gated cation channel tax2/tax4. The polypeptide is Receptor-type guanylate cyclase gcy-14 (Caenorhabditis elegans).